We begin with the raw amino-acid sequence, 646 residues long: Mitochondrial distribution and morphology protein 10 (646 aa).

Disordered stretches follow at residues 206–230 (KSTSSSMDRLDSSNPSLSSSTSLSN) and 315–347 (ETSSSASYPQRNGSVLHTGSSSSSEDTEAGGGL). The segment covering 207 to 230 (STSSSMDRLDSSNPSLSSSTSLSN) has biased composition (low complexity). Polar residues predominate over residues 315–333 (ETSSSASYPQRNGSVLHTG).

It belongs to the MDM10 family. As to quaternary structure, component of the ER-mitochondria encounter structure (ERMES) or MDM complex, composed of MMM1, MDM10, MDM12 and MDM34. Associates with the mitochondrial outer membrane sorting assembly machinery SAM(core) complex.

The protein localises to the mitochondrion outer membrane. Component of the ERMES/MDM complex, which serves as a molecular tether to connect the endoplasmic reticulum and mitochondria. Components of this complex are involved in the control of mitochondrial shape and protein biogenesis and may function in phospholipid exchange. MDM10 is involved in the late assembly steps of the general translocase of the mitochondrial outer membrane (TOM complex). Functions in the TOM40-specific route of the assembly of outer membrane beta-barrel proteins, including the association of TOM40 with the receptor TOM22 and small TOM proteins. Can associate with the SAM(core) complex as well as the MDM12-MMM1 complex, both involved in late steps of the major beta-barrel assembly pathway, that is responsible for biogenesis of all outer membrane beta-barrel proteins. May act as a switch that shuttles between both complexes and channels precursor proteins into the TOM40-specific pathway. Plays a role in mitochondrial morphology and in the inheritance of mitochondria. In Mycosarcoma maydis (Corn smut fungus), this protein is Mitochondrial distribution and morphology protein 10.